The sequence spans 261 residues: Class II histocompatibility antigen, M alpha chain (261 aa).

An N-terminal signal peptide occupies residues 1–26 (MEHEQKSGAVLLRLLRLLWLLPHSWA). The tract at residues 27-124 (VLEASTPVLW…KLEGQIPVSR (98 aa)) is alpha-1. At 27 to 231 (VLEASTPVLW…ALPSDLLENA (205 aa)) the chain is on the lumenal side. Asparagine 41 carries an N-linked (GlcNAc...) asparagine glycan. 2 cysteine pairs are disulfide-bonded: cysteine 50-cysteine 105 and cysteine 147-cysteine 202. The Ig-like C1-type domain occupies 114-215 (PKLEGQIPVS…HEIDRYTAIA (102 aa)). The interval 125–217 (GLSVAEVFTL…IDRYTAIAYW (93 aa)) is alpha-2. The segment at 218 to 231 (VPQNALPSDLLENA) is connecting peptide. The helical transmembrane segment at 232-252 (LCGVAFALGVLGTIIGIVFFL) threads the bilayer. Over 253–261 (CSQRPCSGD) the chain is Cytoplasmic.

It belongs to the MHC class II family. As to quaternary structure, heterodimer of an alpha chain (DMA) and a beta chain (DMB). Interacts with MHCII; this interaction mediates rapid selection of high-affinity peptides.

Its subcellular location is the late endosome membrane. It is found in the lysosome membrane. Functionally, plays a critical role in catalyzing the release of class II-associated invariant chain peptide (CLIP) from newly synthesized MHC class II molecules and freeing the peptide binding site for acquisition of antigenic peptides. The polypeptide is Class II histocompatibility antigen, M alpha chain (H2-DMa) (Mus musculus (Mouse)).